Here is a 318-residue protein sequence, read N- to C-terminus: uncharacterized protein (318 aa).

Residues 2–22 (ILELIIVLVLLVLAFKSLKIL) traverse the membrane as a helical segment. The segment at 295-318 (SDPEDKGVSEVETESQPAEKPEKH) is disordered.

Belongs to the band 7/mec-2 family.

It is found in the membrane. This is an uncharacterized protein from Methanothermobacter thermautotrophicus (strain ATCC 29096 / DSM 1053 / JCM 10044 / NBRC 100330 / Delta H) (Methanobacterium thermoautotrophicum).